Reading from the N-terminus, the 386-residue chain is DNA-directed RNA polymerase subunit Rpo1C (386 aa).

It belongs to the RNA polymerase beta' chain family. In terms of assembly, part of the RNA polymerase complex.

Its subcellular location is the cytoplasm. The enzyme catalyses RNA(n) + a ribonucleoside 5'-triphosphate = RNA(n+1) + diphosphate. In terms of biological role, DNA-dependent RNA polymerase (RNAP) catalyzes the transcription of DNA into RNA using the four ribonucleoside triphosphates as substrates. Forms part of the jaw domain. In Methanococcus maripaludis (strain C6 / ATCC BAA-1332), this protein is DNA-directed RNA polymerase subunit Rpo1C.